Reading from the N-terminus, the 164-residue chain is Phosphopantetheine adenylyltransferase (164 aa).

Ser9 is a binding site for substrate. ATP contacts are provided by residues 9-10 (SF) and His17. Residues Lys41, Leu73, and Arg87 each coordinate substrate. ATP contacts are provided by residues Glu98 and 122 to 128 (YSFLSSS).

This sequence belongs to the bacterial CoaD family. Homohexamer. Mg(2+) serves as cofactor.

The protein resides in the cytoplasm. The catalysed reaction is (R)-4'-phosphopantetheine + ATP + H(+) = 3'-dephospho-CoA + diphosphate. It participates in cofactor biosynthesis; coenzyme A biosynthesis; CoA from (R)-pantothenate: step 4/5. Its function is as follows. Reversibly transfers an adenylyl group from ATP to 4'-phosphopantetheine, yielding dephospho-CoA (dPCoA) and pyrophosphate. The chain is Phosphopantetheine adenylyltransferase from Thermobifida fusca (strain YX).